A 123-amino-acid polypeptide reads, in one-letter code: UPF0738 protein BcerKBAB4_1107 (123 aa).

Belongs to the UPF0738 family.

This Bacillus mycoides (strain KBAB4) (Bacillus weihenstephanensis) protein is UPF0738 protein BcerKBAB4_1107.